Consider the following 662-residue polypeptide: Protein transport Sec1b (662 aa).

Belongs to the STXBP/unc-18/SEC1 family.

Functionally, involved in the vesicle trafficking. Binds syntaxins. The protein is Protein transport Sec1b (SEC1B) of Arabidopsis thaliana (Mouse-ear cress).